Consider the following 709-residue polypeptide: NAD(P)H-quinone oxidoreductase subunit 5, chloroplastic (709 aa).

14 consecutive transmembrane segments (helical) span residues 9–29 (WIIPFVPLPIPIKIGMGLLLF), 40–60 (WAFPNILLLSIVMIFSVDLSI), 89–109 (IDSLTSIMSILITTVGIFVLI), 125–145 (FAYMSLFNTSMLGLLTXSNLI), 147–167 (IYXFWELVGMCSYLLIGFWFT), 219–239 (NEVHFLFVTLCASLLFAGAVA), 257–277 (PTPISALIHAATMVAAGIFLV), 280–300 (LLPLFIVIPYIMNLISLIGII), 327–347 (LGYMMLALGMGSYRAALFHLI), 354–374 (ALLFLGSGSIIHSMEAIVGYS), 396–416 (IAFLVGTLSLCGIPPLACFWS), 425–445 (WLYSPIFAIIAWSTAGLTASY), 540–560 (LFPMLILVLFTLFVGAIAIPF), and 594–614 (FLTNATFSVSIASFGIFTAFL).

Belongs to the complex I subunit 5 family. NDH is composed of at least 16 different subunits, 5 of which are encoded in the nucleus.

The protein resides in the plastid. Its subcellular location is the chloroplast thylakoid membrane. The catalysed reaction is a plastoquinone + NADH + (n+1) H(+)(in) = a plastoquinol + NAD(+) + n H(+)(out). It catalyses the reaction a plastoquinone + NADPH + (n+1) H(+)(in) = a plastoquinol + NADP(+) + n H(+)(out). In terms of biological role, NDH shuttles electrons from NAD(P)H:plastoquinone, via FMN and iron-sulfur (Fe-S) centers, to quinones in the photosynthetic chain and possibly in a chloroplast respiratory chain. The immediate electron acceptor for the enzyme in this species is believed to be plastoquinone. Couples the redox reaction to proton translocation, and thus conserves the redox energy in a proton gradient. This is NAD(P)H-quinone oxidoreductase subunit 5, chloroplastic (ndhF) from Pachira aquatica (Guiana chestnut).